Here is a 313-residue protein sequence, read N- to C-terminus: Porphobilinogen deaminase (313 aa).

C242 carries the S-(dipyrrolylmethanemethyl)cysteine modification.

It belongs to the HMBS family. As to quaternary structure, monomer. Dipyrromethane is required as a cofactor.

The enzyme catalyses 4 porphobilinogen + H2O = hydroxymethylbilane + 4 NH4(+). Its pathway is porphyrin-containing compound metabolism; protoporphyrin-IX biosynthesis; coproporphyrinogen-III from 5-aminolevulinate: step 2/4. Functionally, tetrapolymerization of the monopyrrole PBG into the hydroxymethylbilane pre-uroporphyrinogen in several discrete steps. The sequence is that of Porphobilinogen deaminase from Photorhabdus laumondii subsp. laumondii (strain DSM 15139 / CIP 105565 / TT01) (Photorhabdus luminescens subsp. laumondii).